The sequence spans 429 residues: 3-phosphoshikimate 1-carboxyvinyltransferase (429 aa).

Residues lysine 23, serine 24, and arginine 28 each coordinate 3-phosphoshikimate. Lysine 23 contributes to the phosphoenolpyruvate binding site. Positions 94 and 126 each coordinate phosphoenolpyruvate. Residues serine 171, serine 172, glutamine 173, serine 199, aspartate 316, asparagine 339, and lysine 343 each coordinate 3-phosphoshikimate. Glutamine 173 is a binding site for phosphoenolpyruvate. Aspartate 316 (proton acceptor) is an active-site residue. The phosphoenolpyruvate site is built by arginine 347, arginine 389, and lysine 414.

The protein belongs to the EPSP synthase family. As to quaternary structure, monomer.

It localises to the cytoplasm. It catalyses the reaction 3-phosphoshikimate + phosphoenolpyruvate = 5-O-(1-carboxyvinyl)-3-phosphoshikimate + phosphate. The protein operates within metabolic intermediate biosynthesis; chorismate biosynthesis; chorismate from D-erythrose 4-phosphate and phosphoenolpyruvate: step 6/7. In terms of biological role, catalyzes the transfer of the enolpyruvyl moiety of phosphoenolpyruvate (PEP) to the 5-hydroxyl of shikimate-3-phosphate (S3P) to produce enolpyruvyl shikimate-3-phosphate and inorganic phosphate. The sequence is that of 3-phosphoshikimate 1-carboxyvinyltransferase from Idiomarina loihiensis (strain ATCC BAA-735 / DSM 15497 / L2-TR).